Reading from the N-terminus, the 202-residue chain is Superoxide dismutase [Mn] (202 aa).

Histidine 27, histidine 82, aspartate 164, and histidine 168 together coordinate Mn(2+).

The protein belongs to the iron/manganese superoxide dismutase family. As to quaternary structure, homodimer. Mn(2+) serves as cofactor.

It catalyses the reaction 2 superoxide + 2 H(+) = H2O2 + O2. Destroys superoxide anion radicals which are normally produced within the cells and which are toxic to biological systems. In Listeria monocytogenes serovar 1/2a (strain ATCC BAA-679 / EGD-e), this protein is Superoxide dismutase [Mn] (sodA).